A 195-amino-acid chain; its full sequence is Translation machinery-associated protein 22 (195 aa).

Residues V94–L165 enclose the SUI1 domain. The disordered stretch occupies residues E176–A195.

Belongs to the DENR family. In terms of assembly, interacts with the 40S ribosomal subunit.

The protein resides in the cytoplasm. The sequence is that of Translation machinery-associated protein 22 (TMA22) from Scheffersomyces stipitis (strain ATCC 58785 / CBS 6054 / NBRC 10063 / NRRL Y-11545) (Yeast).